A 181-amino-acid polypeptide reads, in one-letter code: Insulin-like growth factor 2 (181 aa).

A signal peptide spans 1-24; the sequence is MGIPMRKPLLVLLVFLALASCCYA. Residues 25-52 are b; the sequence is AYRPSETLCGGELVDTLQFVCGDRGFYF. Cystine bridges form between cysteine 33–cysteine 71, cysteine 45–cysteine 84, and cysteine 70–cysteine 75. The interval 53 to 64 is c; the sequence is SRPASRVNRRSR. Residues 65–85 are a; it reads GIVEECCFRSCDLALLETYCA. Positions 86 to 91 are d; that stretch reads TPAKSE. A propeptide spans 92–181 (e peptide); sequence RDVSTPPTVL…ASPEASGHRK (90 aa). A disordered region spans residues 151 to 181; that stretch reads EAKRHRPLTARPTRDPAAHGGASPEASGHRK. O-linked (GalNAc...) threonine glycosylation occurs at threonine 163.

This sequence belongs to the insulin family. Interacts with MYORG; this interaction is required for IGF2 secretion. Interacts with integrins ITGAV:ITGB3 and ITGA6:ITGB4; integrin-binding is required for IGF2 signaling. Interacts with IGFBP2. Proteolytically processed by PCSK4, proIGF2 is cleaved at Arg-128 and Arg-92 to generate big-IGF2 and mature IGF2.

It localises to the secreted. Its function is as follows. The insulin-like growth factors possess growth-promoting activity. Major fetal growth hormone in mammals. Plays a key role in regulating fetoplacental development. IGF2 is influenced by placental lactogen. Also involved in tissue differentiation. In adults, involved in glucose metabolism in adipose tissue, skeletal muscle and liver. Acts as a ligand for integrin which is required for IGF2 signaling. Positively regulates myogenic transcription factor MYOD1 function by facilitating the recruitment of transcriptional coactivators, thereby controlling muscle terminal differentiation. Inhibits myoblast differentiation and modulates metabolism via increasing the mitochondrial respiration rate. In terms of biological role, preptin undergoes glucose-mediated co-secretion with insulin, and acts as a physiological amplifier of glucose-mediated insulin secretion. Exhibits osteogenic properties by increasing osteoblast mitogenic activity through phosphoactivation of MAPK1 and MAPK3. The chain is Insulin-like growth factor 2 from Sus scrofa (Pig).